Reading from the N-terminus, the 264-residue chain is Pyridoxine 5'-phosphate synthase (264 aa).

Asn28 provides a ligand contact to 3-amino-2-oxopropyl phosphate. 1-deoxy-D-xylulose 5-phosphate is bound at residue 30-31 (DH). Position 39 (Arg39) interacts with 3-amino-2-oxopropyl phosphate. The Proton acceptor role is filled by His64. Residues Arg66 and His71 each coordinate 1-deoxy-D-xylulose 5-phosphate. Glu91 (proton acceptor) is an active-site residue. A 1-deoxy-D-xylulose 5-phosphate-binding site is contributed by Thr121. Catalysis depends on His217, which acts as the Proton donor. 3-amino-2-oxopropyl phosphate-binding positions include Gly218 and 239-240 (GH).

This sequence belongs to the PNP synthase family. Homooctamer; tetramer of dimers.

It localises to the cytoplasm. It carries out the reaction 3-amino-2-oxopropyl phosphate + 1-deoxy-D-xylulose 5-phosphate = pyridoxine 5'-phosphate + phosphate + 2 H2O + H(+). It participates in cofactor biosynthesis; pyridoxine 5'-phosphate biosynthesis; pyridoxine 5'-phosphate from D-erythrose 4-phosphate: step 5/5. In terms of biological role, catalyzes the complicated ring closure reaction between the two acyclic compounds 1-deoxy-D-xylulose-5-phosphate (DXP) and 3-amino-2-oxopropyl phosphate (1-amino-acetone-3-phosphate or AAP) to form pyridoxine 5'-phosphate (PNP) and inorganic phosphate. The protein is Pyridoxine 5'-phosphate synthase of Psychrobacter arcticus (strain DSM 17307 / VKM B-2377 / 273-4).